A 504-amino-acid chain; its full sequence is Galactose/methyl galactoside import ATP-binding protein MglA (504 aa).

2 consecutive ABC transporter domains span residues 8-247 (LEMN…VGRD) and 258-504 (TPGE…TRFI). Residue 40–47 (GENGAGKS) coordinates ATP.

This sequence belongs to the ABC transporter superfamily. Galactose/methyl galactoside importer (TC 3.A.1.2.3) family. The complex is composed of one ATP-binding protein (MglA), two transmembrane proteins (MglC) and a solute-binding protein (MglB).

It is found in the cell membrane. It carries out the reaction D-galactose(out) + ATP + H2O = D-galactose(in) + ADP + phosphate + H(+). The catalysed reaction is methyl beta-D-galactoside(out) + ATP + H2O = methyl beta-D-galactoside(in) + ADP + phosphate + H(+). In terms of biological role, part of the ABC transporter complex MglABC involved in galactose/methyl galactoside import. Responsible for energy coupling to the transport system. This Clostridium tetani (strain Massachusetts / E88) protein is Galactose/methyl galactoside import ATP-binding protein MglA.